The sequence spans 149 residues: uncharacterized protein (149 aa).

This is an uncharacterized protein from Caenorhabditis elegans.